Here is a 222-residue protein sequence, read N- to C-terminus: Niacin transporter NiaX (222 aa).

The next 5 membrane-spanning stretches (helical) occupy residues 34–54, 72–94, 101–120, 135–155, and 167–187; these read NLIIAAMLTALGILIPMMMPV, MAAMFFSPLMTAFVALGTTLGFM, TIWLRALMHLPVMTVGAYVL, IFNFILGIFHAGLETLVVYAF, and ALLNFLLLIALGGLVHSMIDF.

The protein belongs to the vitamin uptake transporter (VUT/ECF) (TC 2.A.88) family. In terms of assembly, in L.lactis forms a stable complex with EcfA, EcfA' and EcfT. In E.coli forms a stable energy-coupling factor (ECF) transporter complex composed of 2 membrane-embedded substrate-binding proteins (S component), 2 ATP-binding proteins (A and A' components) and 2 transmembrane proteins (T component), probably with a stoichiometry of 2:1:1:2. May be able to interact with more than 1 S component at a time.

The protein localises to the cell membrane. In terms of biological role, probably a niacin-binding protein that interacts with the energy-coupling factor (ECF) ABC-transporter complex. Unlike classic ABC transporters this ECF transporter provides the energy necessary to transport a number of different substrates. The substrates themselves are bound by transmembrane, not extracytoplasmic soluble proteins. Uptake of niacin into proteosomes containing EcfA1A2T and Niax has been demonstrated. Uptake requires hydrolyzable Mg-ATP and is substrate-specific; NiaX-containing proteosomes did not transport riboflavin. The protein is Niacin transporter NiaX (niaX) of Lactococcus lactis subsp. cremoris (strain MG1363).